Reading from the N-terminus, the 214-residue chain is Ribosomal RNA small subunit methyltransferase G (214 aa).

S-adenosyl-L-methionine contacts are provided by residues G77, L82, V128–E129, and R143.

It belongs to the methyltransferase superfamily. RNA methyltransferase RsmG family.

The protein localises to the cytoplasm. The catalysed reaction is guanosine(527) in 16S rRNA + S-adenosyl-L-methionine = N(7)-methylguanosine(527) in 16S rRNA + S-adenosyl-L-homocysteine. Its function is as follows. Specifically methylates the N7 position of guanine in position 527 of 16S rRNA. The protein is Ribosomal RNA small subunit methyltransferase G of Nitrosococcus oceani (strain ATCC 19707 / BCRC 17464 / JCM 30415 / NCIMB 11848 / C-107).